Here is a 120-residue protein sequence, read N- to C-terminus: Protein ORF-C (120 aa).

The protein localises to the host mitochondrion. Induces alteration of mitochondrial function that results in apoptosis contributing to tumor regression. This Walleye dermal sarcoma virus (WDSV) protein is Protein ORF-C (orfC).